We begin with the raw amino-acid sequence, 275 residues long: Rhamnulose-1-phosphate aldolase (275 aa).

Glu-117 is a catalytic residue. Zn(2+) is bound by residues His-141, His-143, and His-212.

The protein belongs to the aldolase class II family. RhaD subfamily. In terms of assembly, homotetramer. Zn(2+) serves as cofactor.

It is found in the cytoplasm. It catalyses the reaction L-rhamnulose 1-phosphate = (S)-lactaldehyde + dihydroxyacetone phosphate. It participates in carbohydrate degradation; L-rhamnose degradation; glycerone phosphate from L-rhamnose: step 3/3. Functionally, catalyzes the reversible cleavage of L-rhamnulose-1-phosphate to dihydroxyacetone phosphate (DHAP) and L-lactaldehyde. The sequence is that of Rhamnulose-1-phosphate aldolase from Salmonella dublin (strain CT_02021853).